The sequence spans 338 residues: DNA-directed RNA polymerase subunit alpha (338 aa).

Residues 1 to 234 (MIHKNWAELI…DQLSIFVNFE (234 aa)) form an alpha N-terminal domain (alpha-NTD) region. The interval 250–338 (FNPLLLKKVD…DLAKRFEDQF (89 aa)) is alpha C-terminal domain (alpha-CTD).

It belongs to the RNA polymerase alpha chain family. As to quaternary structure, homodimer. The RNAP catalytic core consists of 2 alpha, 1 beta, 1 beta' and 1 omega subunit. When a sigma factor is associated with the core the holoenzyme is formed, which can initiate transcription.

The catalysed reaction is RNA(n) + a ribonucleoside 5'-triphosphate = RNA(n+1) + diphosphate. DNA-dependent RNA polymerase catalyzes the transcription of DNA into RNA using the four ribonucleoside triphosphates as substrates. In Cereibacter sphaeroides (strain ATCC 17029 / ATH 2.4.9) (Rhodobacter sphaeroides), this protein is DNA-directed RNA polymerase subunit alpha.